Consider the following 347-residue polypeptide: NADH-ubiquinone oxidoreductase chain 2 (347 aa).

11 consecutive transmembrane segments (helical) span residues 3–23 (PPIF…VMTS), 25–45 (HWML…PILM), 59–79 (YFLT…INLL), 96–116 (ILMT…FWVP), 122–142 (IPLS…LSVL), 149–169 (INPN…GWGG), 178–198 (ILAY…LYNP), 201–221 (MILN…LFML), 237–257 (MPLI…LPPL), 274–294 (EMII…YFYM), and 325–345 (FLPP…MISI).

The protein belongs to the complex I subunit 2 family. As to quaternary structure, core subunit of respiratory chain NADH dehydrogenase (Complex I) which is composed of 45 different subunits. Interacts with TMEM242.

The protein resides in the mitochondrion inner membrane. It carries out the reaction a ubiquinone + NADH + 5 H(+)(in) = a ubiquinol + NAD(+) + 4 H(+)(out). In terms of biological role, core subunit of the mitochondrial membrane respiratory chain NADH dehydrogenase (Complex I) which catalyzes electron transfer from NADH through the respiratory chain, using ubiquinone as an electron acceptor. Essential for the catalytic activity and assembly of complex I. The sequence is that of NADH-ubiquinone oxidoreductase chain 2 from Genetta servalina (Servaline genet).